The primary structure comprises 302 residues: Glycine--tRNA ligase alpha subunit (302 aa).

It belongs to the class-II aminoacyl-tRNA synthetase family. As to quaternary structure, tetramer of two alpha and two beta subunits.

The protein resides in the cytoplasm. It catalyses the reaction tRNA(Gly) + glycine + ATP = glycyl-tRNA(Gly) + AMP + diphosphate. The protein is Glycine--tRNA ligase alpha subunit (glyQ) of Haemophilus influenzae (strain ATCC 51907 / DSM 11121 / KW20 / Rd).